A 144-amino-acid chain; its full sequence is MLKGIHPALSPELLKTLAEMGHGDEIVLADAHFPAHSLHKNVIRADGISIDILLEAITPLFEFDAYVDAPLLMMKAVEGDSLDPNVETRYLNAIESAVGFTPNLTCLERFDFYTRAKQAYAVVVSGEIAKYGNIIIKKGVTPIL.

Histidine 22 acts as the Proton donor in catalysis. Substrate-binding positions include aspartate 30, arginine 109, and 131-133 (YGN).

The protein belongs to the RbsD / FucU family. FucU mutarotase subfamily. Homodecamer.

The protein resides in the cytoplasm. The catalysed reaction is alpha-L-fucose = beta-L-fucose. Its pathway is carbohydrate metabolism; L-fucose metabolism. Functionally, involved in the anomeric conversion of L-fucose. The polypeptide is L-fucose mutarotase (Haemophilus influenzae (strain PittGG)).